A 368-amino-acid chain; its full sequence is tRNA-specific 2-thiouridylase MnmA (368 aa).

ATP is bound by residues 11 to 18 (GMSGGVDS) and Met-37. Residues 97–99 (NPD) are interaction with target base in tRNA. Cys-102 serves as the catalytic Nucleophile. Residues Cys-102 and Cys-199 are joined by a disulfide bond. Gly-127 serves as a coordination point for ATP. Positions 149–151 (KDQ) are interaction with tRNA. The active-site Cysteine persulfide intermediate is the Cys-199. Positions 311–312 (RY) are interaction with tRNA.

This sequence belongs to the MnmA/TRMU family. As to quaternary structure, interacts with TusE.

The protein localises to the cytoplasm. It catalyses the reaction S-sulfanyl-L-cysteinyl-[protein] + uridine(34) in tRNA + AH2 + ATP = 2-thiouridine(34) in tRNA + L-cysteinyl-[protein] + A + AMP + diphosphate + H(+). In terms of biological role, catalyzes the 2-thiolation of uridine at the wobble position (U34) of tRNA(Lys), tRNA(Glu) and tRNA(Gln), leading to the formation of s(2)U34, the first step of tRNA-mnm(5)s(2)U34 synthesis. Sulfur is provided by IscS, via a sulfur-relay system. Binds ATP and its substrate tRNAs. This Escherichia coli (strain SMS-3-5 / SECEC) protein is tRNA-specific 2-thiouridylase MnmA.